We begin with the raw amino-acid sequence, 466 residues long: Ribulose bisphosphate carboxylase large chain (466 aa).

Position 5 is an N6,N6,N6-trimethyllysine (lysine 5). The substrate site is built by asparagine 114 and threonine 164. The Proton acceptor role is filled by lysine 166. A substrate-binding site is contributed by lysine 168. Residues lysine 192, aspartate 194, and glutamate 195 each coordinate Mg(2+). Position 192 is an N6-carboxylysine (lysine 192). Catalysis depends on histidine 285, which acts as the Proton acceptor. The substrate site is built by arginine 286, histidine 318, and serine 370.

Belongs to the RuBisCO large chain family. Type I subfamily. Heterohexadecamer of 8 large chains and 8 small chains; disulfide-linked. The disulfide link is formed within the large subunit homodimers. Mg(2+) is required as a cofactor. Post-translationally, the disulfide bond which can form in the large chain dimeric partners within the hexadecamer appears to be associated with oxidative stress and protein turnover.

The protein resides in the plastid. Its subcellular location is the chloroplast. It catalyses the reaction 2 (2R)-3-phosphoglycerate + 2 H(+) = D-ribulose 1,5-bisphosphate + CO2 + H2O. The enzyme catalyses D-ribulose 1,5-bisphosphate + O2 = 2-phosphoglycolate + (2R)-3-phosphoglycerate + 2 H(+). Its function is as follows. RuBisCO catalyzes two reactions: the carboxylation of D-ribulose 1,5-bisphosphate, the primary event in carbon dioxide fixation, as well as the oxidative fragmentation of the pentose substrate in the photorespiration process. Both reactions occur simultaneously and in competition at the same active site. The protein is Ribulose bisphosphate carboxylase large chain of Thespesia populnea (Portia tree).